Here is a 204-residue protein sequence, read N- to C-terminus: LexA repressor (204 aa).

The segment at residues 29–49 is a DNA-binding region (H-T-H motif); the sequence is RAEIADIMGFQSKNAASDHLR. Active-site for autocatalytic cleavage activity residues include serine 123 and lysine 160.

This sequence belongs to the peptidase S24 family. Homodimer.

It catalyses the reaction Hydrolysis of Ala-|-Gly bond in repressor LexA.. In terms of biological role, represses a number of genes involved in the response to DNA damage (SOS response), including recA and lexA. In the presence of single-stranded DNA, RecA interacts with LexA causing an autocatalytic cleavage which disrupts the DNA-binding part of LexA, leading to derepression of the SOS regulon and eventually DNA repair. This Alcanivorax borkumensis (strain ATCC 700651 / DSM 11573 / NCIMB 13689 / SK2) protein is LexA repressor.